Here is a 232-residue protein sequence, read N- to C-terminus: Modulator of macroautophagy TMEM150B (232 aa).

The Cytoplasmic portion of the chain corresponds to 1 to 6 (MWAWAL). Residues 7 to 27 (LPVFLAVFGTVGLWAVYAIAV) traverse the membrane as a helical segment. Residues 28–50 (SNNSVNITIEFPYISTCGAYTPQ) lie on the Extracellular side of the membrane. 2 N-linked (GlcNAc...) asparagine glycosylation sites follow: asparagine 29 and asparagine 33. Residues 51–71 (SCLFAQICNICCVLALWIVVI) traverse the membrane as a helical segment. At 72–83 (RFQQIRDLGRSS) the chain is on the cytoplasmic side. The helical transmembrane segment at 84–104 (HLNTAGLVLGFISSIGISILG) threads the bilayer. Topologically, residues 105 to 115 (NFQQTIIQEVH) are extracellular. A helical transmembrane segment spans residues 116–136 (LLGALMAFFLGLAYFWIQAFI). The Cytoplasmic portion of the chain corresponds to 137-153 (TYFSPPSRDNKWLVPVR). Residues 154-174 (FVLCSQCTCMVICMFVLHSTG) traverse the membrane as a helical segment. Topologically, residues 175–177 (FRS) are extracellular. Residues 178–198 (AAAICEWILVMCFFALFGVFA) traverse the membrane as a helical segment. Topologically, residues 199-232 (AEFRHIDFHKLTVQKEGLKVANNDNVVWTVQDVQ) are cytoplasmic.

It belongs to the DRAM/TMEM150 family.

The protein resides in the cell membrane. It is found in the endosome membrane. The protein localises to the cytoplasmic vesicle. It localises to the autophagosome membrane. Its function is as follows. Modulator of macroautophagy that causes accumulation of autophagosomes under basal conditions and enhances autophagic flux. Represses cell death and promotes long-term clonogenic survival of cells grown in the absence of glucose in a macroautophagy-independent manner. May have some role in extracellular matrix engulfment or growth factor receptor recycling, both of which can modulate cell survival. This chain is Modulator of macroautophagy TMEM150B, found in Danio rerio (Zebrafish).